Consider the following 326-residue polypeptide: Tryptophan--tRNA ligase (326 aa).

Residues 11 to 13 (QPT) and 19 to 20 (GN) contribute to the ATP site. The 'HIGH' region signature appears at 12 to 20 (PTGQIHLGN). Aspartate 135 lines the L-tryptophan pocket. ATP is bound by residues 147 to 149 (GED), valine 186, and 195 to 199 (KMSKS). A 'KMSKS' region motif is present at residues 195-199 (KMSKS).

The protein belongs to the class-I aminoacyl-tRNA synthetase family. In terms of assembly, homodimer.

It is found in the cytoplasm. The catalysed reaction is tRNA(Trp) + L-tryptophan + ATP = L-tryptophyl-tRNA(Trp) + AMP + diphosphate + H(+). Functionally, catalyzes the attachment of tryptophan to tRNA(Trp). The protein is Tryptophan--tRNA ligase of Helicobacter pylori (strain J99 / ATCC 700824) (Campylobacter pylori J99).